The sequence spans 507 residues: Protein disulfide-isomerase (507 aa).

A signal peptide spans 1-20; sequence MASMVSFCFLLLFLAFFASS. Residues 21–144 form the Thioredoxin 1 domain; sequence FNEIYAEESE…IVDYLKKQSG (124 aa). Active-site nucleophile residues include Cys-62 and Cys-65. An intrachain disulfide couples Cys-62 to Cys-65. Asn-181 and Asn-278 each carry an N-linked (GlcNAc...) asparagine glycan. Residues 365 to 485 enclose the Thioredoxin 2 domain; it reads YRKSEPIPEH…FIEFIEKNRE (121 aa). Catalysis depends on nucleophile residues Cys-407 and Cys-410. An intrachain disulfide couples Cys-407 to Cys-410. Positions 484-507 are disordered; sequence REKSSKKESIVKDDQTDSETKAEL. Positions 504–507 match the Prevents secretion from ER motif; that stretch reads KAEL.

Belongs to the protein disulfide isomerase family.

It localises to the endoplasmic reticulum lumen. It catalyses the reaction Catalyzes the rearrangement of -S-S- bonds in proteins.. In terms of biological role, participates in the folding of proteins containing disulfide bonds, may be involved in glycosylation, prolyl hydroxylation and triglyceride transfer. The chain is Protein disulfide-isomerase (PDI) from Datisca glomerata (Durango root).